A 255-amino-acid chain; its full sequence is Dehydrogenase/reductase SDR family member 11 (255 aa).

The N-terminal stretch at 1 to 25 (MERWRDRLALVTGASGGIGAAVARA) is a signal peptide. Residues 13–18 (GASGGI), 38–39 (RT), Glu-44, 65–66 (DL), and Asn-92 each bind NADP(+). Substrate contacts are provided by Ser-146 and Tyr-161. NADP(+)-binding positions include Tyr-161, Lys-165, 196–199 (VETQ), and Lys-203. The active-site Proton acceptor is the Tyr-161.

The protein belongs to the short-chain dehydrogenases/reductases (SDR) family.

It is found in the secreted. The enzyme catalyses a 3beta-hydroxysteroid + NADP(+) = a 3-oxosteroid + NADPH + H(+). It carries out the reaction 17beta-estradiol + NAD(+) = estrone + NADH + H(+). The catalysed reaction is 17beta-estradiol + NADP(+) = estrone + NADPH + H(+). The protein operates within steroid biosynthesis; estrogen biosynthesis. With respect to regulation, inhibited by flavonoids including apigenin, luteolin, genistein, kaempferol and quercetin and also by carbenoxolone, zearalenone, glycyrrhetinic, curcumin and flufenamic acid. Its function is as follows. Catalyzes the conversion of the 17-keto group of estrone, 4- and 5-androstenes and 5-alpha-androstanes into their 17-beta-hydroxyl metabolites and the conversion of the 3-keto group of 3-, 3,17- and 3,20- diketosteroids into their 3-hydroxyl metabolites. Exhibits reductive 3-beta-hydroxysteroid dehydrogenase activity toward 5-beta-androstanes, 5-beta-pregnanes, 4-pregnenes and bile acids. May also reduce endogenous and exogenous alpha-dicarbonyl compounds and xenobiotic alicyclic ketones. The sequence is that of Dehydrogenase/reductase SDR family member 11 (DHRS11) from Bos taurus (Bovine).